The following is a 501-amino-acid chain: GMP synthase [glutamine-hydrolyzing] (501 aa).

The Glutamine amidotransferase type-1 domain occupies 1–185 (MVLVVDYGSQ…LFNVCKLEKN (185 aa)). Cys75 (nucleophile) is an active-site residue. Residues His159 and Glu161 contribute to the active site. The GMPS ATP-PPase domain maps to 186–376 (WKIGDLVEEK…LGIPDRIINR (191 aa)). Position 213 to 219 (213 to 219 (SGGVDSS)) interacts with ATP.

As to quaternary structure, homodimer.

It catalyses the reaction XMP + L-glutamine + ATP + H2O = GMP + L-glutamate + AMP + diphosphate + 2 H(+). It participates in purine metabolism; GMP biosynthesis; GMP from XMP (L-Gln route): step 1/1. In terms of biological role, catalyzes the synthesis of GMP from XMP. This Thermotoga petrophila (strain ATCC BAA-488 / DSM 13995 / JCM 10881 / RKU-1) protein is GMP synthase [glutamine-hydrolyzing].